We begin with the raw amino-acid sequence, 300 residues long: Nucleotide-binding protein TM1040_2438 (300 aa).

24-31 is an ATP binding site; sequence GPSGAGRT. A GTP-binding site is contributed by 71–74; the sequence is DPRN.

It belongs to the RapZ-like family.

Functionally, displays ATPase and GTPase activities. This chain is Nucleotide-binding protein TM1040_2438, found in Ruegeria sp. (strain TM1040) (Silicibacter sp.).